The chain runs to 1342 residues: Putative aldehyde oxidase-like protein (1342 aa).

A disordered region spans residues M1–V23. An FAD-binding PCMH-type domain is found at I221 to S408.

The protein belongs to the xanthine dehydrogenase family.

The protein is Putative aldehyde oxidase-like protein of Oryza sativa subsp. japonica (Rice).